A 157-amino-acid polypeptide reads, in one-letter code: 2-C-methyl-D-erythritol 2,4-cyclodiphosphate synthase (157 aa).

The a divalent metal cation site is built by D8 and H10. 4-CDP-2-C-methyl-D-erythritol 2-phosphate is bound by residues 8–10 (DVH) and 34–35 (HS). An a divalent metal cation-binding site is contributed by H42. 4-CDP-2-C-methyl-D-erythritol 2-phosphate contacts are provided by residues 56–58 (DIG), 61–65 (FPDTD), 100–106 (AQAPKMA), 132–135 (TTTE), F139, and R142.

The protein belongs to the IspF family. In terms of assembly, homotrimer. A divalent metal cation is required as a cofactor.

It catalyses the reaction 4-CDP-2-C-methyl-D-erythritol 2-phosphate = 2-C-methyl-D-erythritol 2,4-cyclic diphosphate + CMP. It participates in isoprenoid biosynthesis; isopentenyl diphosphate biosynthesis via DXP pathway; isopentenyl diphosphate from 1-deoxy-D-xylulose 5-phosphate: step 4/6. Involved in the biosynthesis of isopentenyl diphosphate (IPP) and dimethylallyl diphosphate (DMAPP), two major building blocks of isoprenoid compounds. Catalyzes the conversion of 4-diphosphocytidyl-2-C-methyl-D-erythritol 2-phosphate (CDP-ME2P) to 2-C-methyl-D-erythritol 2,4-cyclodiphosphate (ME-CPP) with a corresponding release of cytidine 5-monophosphate (CMP). The protein is 2-C-methyl-D-erythritol 2,4-cyclodiphosphate synthase of Pseudomonas fluorescens (strain ATCC BAA-477 / NRRL B-23932 / Pf-5).